A 508-amino-acid chain; its full sequence is Histidine ammonia-lyase (508 aa).

A cross-link (5-imidazolinone (Ala-Gly)) is located at residues 141–143 (ASG). At serine 142 the chain carries 2,3-didehydroalanine (Ser).

The protein belongs to the PAL/histidase family. Post-translationally, contains an active site 4-methylidene-imidazol-5-one (MIO), which is formed autocatalytically by cyclization and dehydration of residues Ala-Ser-Gly.

It localises to the cytoplasm. It carries out the reaction L-histidine = trans-urocanate + NH4(+). It functions in the pathway amino-acid degradation; L-histidine degradation into L-glutamate; N-formimidoyl-L-glutamate from L-histidine: step 1/3. This is Histidine ammonia-lyase from Geobacillus sp. (strain WCH70).